We begin with the raw amino-acid sequence, 508 residues long: Photosystem II CP47 reaction center protein (508 aa).

6 helical membrane-spanning segments follow: residues 21–36 (SVHIMHTALVSGWAGS), 101–115 (IVFSGLCFLAAIWHW), 140–156 (GIHLFLSGVACFGFGAF), 203–218 (IAAGTLGILAGLFHLS), 237–252 (VLSSSIAAVFFAAFVV), and 457–472 (SFALLFFFGHIWHGAR).

This sequence belongs to the PsbB/PsbC family. PsbB subfamily. In terms of assembly, PSII is composed of 1 copy each of membrane proteins PsbA, PsbB, PsbC, PsbD, PsbE, PsbF, PsbH, PsbI, PsbJ, PsbK, PsbL, PsbM, PsbT, PsbX, PsbY, PsbZ, Psb30/Ycf12, at least 3 peripheral proteins of the oxygen-evolving complex and a large number of cofactors. It forms dimeric complexes. It depends on Binds multiple chlorophylls. PSII binds additional chlorophylls, carotenoids and specific lipids. as a cofactor.

The protein resides in the plastid. The protein localises to the chloroplast thylakoid membrane. Functionally, one of the components of the core complex of photosystem II (PSII). It binds chlorophyll and helps catalyze the primary light-induced photochemical processes of PSII. PSII is a light-driven water:plastoquinone oxidoreductase, using light energy to abstract electrons from H(2)O, generating O(2) and a proton gradient subsequently used for ATP formation. The polypeptide is Photosystem II CP47 reaction center protein (Nymphaea alba (White water-lily)).